Reading from the N-terminus, the 287-residue chain is Probable ketose 3-epimerase (287 aa).

Glutamate 152 functions as the Proton donor/acceptor in the catalytic mechanism. Glutamate 152 and aspartate 185 together coordinate Mn(2+). Histidine 188 contributes to the substrate binding site. A Mn(2+)-binding site is contributed by histidine 211. Arginine 217 lines the substrate pocket. Glutamate 246 acts as the Proton donor/acceptor in catalysis. Glutamate 246 contacts Mn(2+).

This sequence belongs to the hyi family. Mn(2+) serves as cofactor.

Probably catalyzes the epimerization of ketopentoses and/or ketohexoses at the C3 position. This Synechocystis sp. (strain ATCC 27184 / PCC 6803 / Kazusa) protein is Probable ketose 3-epimerase.